The primary structure comprises 279 residues: Energy-coupling factor transporter ATP-binding protein EcfA1 (279 aa).

The ABC transporter domain maps to 8–240; that stretch reads IKFENVSFSY…KQFLRDINLD (233 aa). Residue 41-48 coordinates ATP; it reads GHNGSGKS.

Belongs to the ABC transporter superfamily. Energy-coupling factor EcfA family. In terms of assembly, forms a stable energy-coupling factor (ECF) transporter complex composed of 2 membrane-embedded substrate-binding proteins (S component), 2 ATP-binding proteins (A component) and 2 transmembrane proteins (T component).

It is found in the cell membrane. ATP-binding (A) component of a common energy-coupling factor (ECF) ABC-transporter complex. Unlike classic ABC transporters this ECF transporter provides the energy necessary to transport a number of different substrates. This Mycoplasmoides gallisepticum (strain R(low / passage 15 / clone 2)) (Mycoplasma gallisepticum) protein is Energy-coupling factor transporter ATP-binding protein EcfA1.